The sequence spans 118 residues: Thioredoxin H3 (118 aa).

At alanine 2 the chain carries N-acetylalanine. Positions 2-113 (AAEGEVIACH…IIANLEKHKT (112 aa)) constitute a Thioredoxin domain. Catalysis depends on nucleophile residues cysteine 39 and cysteine 42. A disulfide bridge connects residues cysteine 39 and cysteine 42.

This sequence belongs to the thioredoxin family. Plant H-type subfamily. As to quaternary structure, interacts with FBA5 and FBA8. Interacts with FBA6. Interacts with MDH1.

It is found in the cytoplasm. Functionally, thiol-disulfide oxidoreductase that possesses disulfide reductase and insulin disulfide bonds reducing activities. Heat shock causes oligomerization and formation of high molecular weight (HMW) complexes with concomitant functional switching from a disulfide reductase to chaperone. This chain is Thioredoxin H3 (TRX3), found in Arabidopsis thaliana (Mouse-ear cress).